Reading from the N-terminus, the 328-residue chain is Methionyl-tRNA formyltransferase (328 aa).

A (6S)-5,6,7,8-tetrahydrofolate-binding site is contributed by 110–113 (SNLP).

Belongs to the Fmt family.

It catalyses the reaction L-methionyl-tRNA(fMet) + (6R)-10-formyltetrahydrofolate = N-formyl-L-methionyl-tRNA(fMet) + (6S)-5,6,7,8-tetrahydrofolate + H(+). Functionally, attaches a formyl group to the free amino group of methionyl-tRNA(fMet). The formyl group appears to play a dual role in the initiator identity of N-formylmethionyl-tRNA by promoting its recognition by IF2 and preventing the misappropriation of this tRNA by the elongation apparatus. The protein is Methionyl-tRNA formyltransferase of Bifidobacterium longum (strain DJO10A).